A 174-amino-acid polypeptide reads, in one-letter code: Protein PopB (174 aa).

A disordered region spans residues 1-174; it reads MSHSKIKAGG…EAMKIKDDDD (174 aa). Residues 50-65 are compositionally biased toward polar residues; it reads LNKSNLGSDSQTWTPG. Residues 66–78 are compositionally biased toward low complexity; that stretch reads STMVSLKSRSSSS. A compositionally biased stretch (basic and acidic residues) spans 79 to 89; the sequence is HKPDTGGDTKP. The span at 147-161 shows a compositional bias: low complexity; it reads IALQRAIQRQTQTRQ. Over residues 162-174 the composition is skewed to basic and acidic residues; sequence KMQEAMKIKDDDD.

It is found in the secreted. In terms of biological role, probably involved in host-pathogen interactions. This chain is Protein PopB (popB), found in Ralstonia nicotianae (strain ATCC BAA-1114 / GMI1000) (Ralstonia solanacearum).